The chain runs to 419 residues: 3-isopropylmalate dehydratase large subunit (419 aa).

Residues Cys300, Cys360, and Cys363 each contribute to the [4Fe-4S] cluster site.

Belongs to the aconitase/IPM isomerase family. LeuC type 2 subfamily. Heterodimer of LeuC and LeuD. It depends on [4Fe-4S] cluster as a cofactor.

It catalyses the reaction (2R,3S)-3-isopropylmalate = (2S)-2-isopropylmalate. The protein operates within amino-acid biosynthesis; L-leucine biosynthesis; L-leucine from 3-methyl-2-oxobutanoate: step 2/4. Functionally, catalyzes the isomerization between 2-isopropylmalate and 3-isopropylmalate, via the formation of 2-isopropylmaleate. The polypeptide is 3-isopropylmalate dehydratase large subunit (Clostridium beijerinckii (strain ATCC 51743 / NCIMB 8052) (Clostridium acetobutylicum)).